We begin with the raw amino-acid sequence, 92 residues long: MRVNSRNIAYHELIGLEVRILQYPDPSLVGLKGKVVDETLKTLVIETPSGRRVRIFKFNSILEFMLPDGEAVVIKGSTIIGRPWDRLKMVSR.

The protein belongs to the eukaryotic/archaeal RNase P protein component 1 family. As to quaternary structure, consists of a catalytic RNA component and at least 4-5 protein subunits.

Its subcellular location is the cytoplasm. The catalysed reaction is Endonucleolytic cleavage of RNA, removing 5'-extranucleotides from tRNA precursor.. Its function is as follows. Part of ribonuclease P, a protein complex that generates mature tRNA molecules by cleaving their 5'-ends. The polypeptide is Ribonuclease P protein component 1 (Desulfurococcus amylolyticus (strain DSM 18924 / JCM 16383 / VKM B-2413 / 1221n) (Desulfurococcus kamchatkensis)).